The primary structure comprises 276 residues: MAIINHKPTSPGRRGRVDVTRPELHKGKPFAALVEKKTRGSGRNNAGRITVRHKGGGHAQKYRLIDFCRNKDGIDAVVERLEYDPNRTSFIALLRYSDGERRYVIAARDMKAGDIVRNGEDAPIKDGNCLPMRNIPVGSTIYCVELKPGKGAQLARSAGASAQMVAREGKYVTVRLKSGERRLVLADCRAVLGEVSNHEHSLRSYGKAGAKRWLGIRPTVRGVVMNPVDHPHGGGEGRTASGRHPVSPWGLPTKGYKTRNNKRTDSLIVQRRKKRG.

The tract at residues 224–265 (VMNPVDHPHGGGEGRTASGRHPVSPWGLPTKGYKTRNNKRTD) is disordered.

Belongs to the universal ribosomal protein uL2 family. As to quaternary structure, part of the 50S ribosomal subunit. Forms a bridge to the 30S subunit in the 70S ribosome.

In terms of biological role, one of the primary rRNA binding proteins. Required for association of the 30S and 50S subunits to form the 70S ribosome, for tRNA binding and peptide bond formation. It has been suggested to have peptidyltransferase activity; this is somewhat controversial. Makes several contacts with the 16S rRNA in the 70S ribosome. The sequence is that of Large ribosomal subunit protein uL2 from Dichelobacter nodosus (strain VCS1703A).